Consider the following 273-residue polypeptide: Glucosamine-6-phosphate deaminase (273 aa).

D72 acts as the Proton acceptor; for enolization step in catalysis. The For ring-opening step role is filled by D141. The active-site Proton acceptor; for ring-opening step is the H143. E148 functions as the For ring-opening step in the catalytic mechanism.

This sequence belongs to the glucosamine/galactosamine-6-phosphate isomerase family. As to quaternary structure, homohexamer.

The protein localises to the cytoplasm. It catalyses the reaction alpha-D-glucosamine 6-phosphate + H2O = beta-D-fructose 6-phosphate + NH4(+). It functions in the pathway nucleotide-sugar biosynthesis; UDP-N-acetyl-alpha-D-glucosamine biosynthesis; alpha-D-glucosamine 6-phosphate from D-fructose 6-phosphate: step 1/1. Functionally, catalyzes the reversible conversion of alpha-D-glucosamine 6-phosphate (GlcN-6P) into beta-D-fructose 6-phosphate (Fru-6P) and ammonium ion, a regulatory reaction step in de novo uridine diphosphate-N-acetyl-alpha-D-glucosamine (UDP-GlcNAc) biosynthesis via hexosamine pathway. The chain is Glucosamine-6-phosphate deaminase (Gnpda1) from Anopheles gambiae (African malaria mosquito).